The following is a 547-amino-acid chain: GID complex substrate-recognition subunit 10 (547 aa).

Polar residues-rich tracts occupy residues 1 to 11 and 28 to 41; these read MPRSLDNFQNE and GFPN…SNSQ. Disordered stretches follow at residues 1–42, 60–115, 169–217, and 285–313; these read MPRS…NSQR, EQDS…SNAT, RNSS…NPQS, and PAVL…QTPN. Basic residues predominate over residues 99 to 108; sequence SASRQRRRSG. The segment covering 169-185 has biased composition (polar residues); it reads RNSSTFGSNPNSVFSAQ. Composition is skewed to low complexity over residues 186 to 199, 207 to 217, and 298 to 307; these read PTEP…SSFP, SRSISISNPQS, and SSSSASSYGS.

This sequence belongs to the GID4/VID24 family. Substrate-recognition component of the GID/CTLH complex. In the absence of stress, the complex exists as an inactive anticipatory complex (GID(Ant)), composed of Gid1, the E3 ubiquitin-ligase Gid2, Gid5, Gid8, and the RING-like subunit Gid9, awaiting a substrate receptor to form the active E3 ligase complex. When cells are shifted to glucose-containing medium, the substrate receptor Gid4 is induced and becomes part of the complex, named GID(SR4). Additionally, Gid7 transforms the GID(SR4) E3 ligase core into a higher-order supramolecular assembly (Chelator-GID(SR4)). Under osmotic or heat stress, the substrate receptor Gid10 is induced and becomes part of the complex, named GID(SR10). Interacts with proteins that have an N-terminal Pro/N-degron.

It localises to the nucleus. Its function is as follows. Substrate-recognition component of the GID E3 ligase complex recruiting N termini and catalyzing ubiquitination of proteins targeted for degradation. GID E3 is regulated through assembly with interchangeable N-degron-binding substrate receptors induced by distinct environmental perturbations. Required for the adaptation to osmotic or heat stress. Specific for substrates with an N-terminal Pro (Pro/N-degron). The chain is GID complex substrate-recognition subunit 10 (gid10) from Schizosaccharomyces pombe (strain 972 / ATCC 24843) (Fission yeast).